Here is a 443-residue protein sequence, read N- to C-terminus: Serine/threonine-protein phosphatase 2A 55 kDa regulatory subunit B beta isoform (443 aa).

7 WD repeats span residues 22 to 61 (TEADIISTVEFNSTGELLATGDKGGRVVIFQREQENKNQP), 87 to 128 (EIEE…KRPE), 171 to 209 (AHTYHINSISVNSDYETYMSADDLRINLWNLEITNRSFN), 220 to 260 (ELTE…LCDR), 279 to 317 (EIISSISDVKFNHSGRYIMTRDYLTVKVWDLNMENRPIE), 334 to 375 (ENDC…DVTL), and 410 to 443 (DFSKKILHTAWHPSENIIAVAATNNLYIFQDKVN).

The protein belongs to the phosphatase 2A regulatory subunit B family. As to quaternary structure, PP2A consists of a common heterodimeric core enzyme, composed of a 36 kDa catalytic subunit (subunit C) and a 65 kDa constant regulatory subunit (PR65 or subunit A), that associates with a variety of regulatory subunits.

It localises to the cytoplasm. Its subcellular location is the cytoskeleton. The protein resides in the membrane. Functionally, the B regulatory subunit might modulate substrate selectivity and catalytic activity, and might also direct the localization of the catalytic enzyme to a particular subcellular compartment. Negatively controls the initiation of oocyte maturation. The protein is Serine/threonine-protein phosphatase 2A 55 kDa regulatory subunit B beta isoform (ppp2r2b) of Xenopus tropicalis (Western clawed frog).